Consider the following 340-residue polypeptide: Fructose-1,6-bisphosphatase class 1 (340 aa).

Mg(2+)-binding residues include E107, D126, L128, and D129. Residue N215 coordinates substrate. E287 contacts Mg(2+).

This sequence belongs to the FBPase class 1 family. In terms of assembly, homotetramer. The cofactor is Mg(2+).

It is found in the cytoplasm. The enzyme catalyses beta-D-fructose 1,6-bisphosphate + H2O = beta-D-fructose 6-phosphate + phosphate. It functions in the pathway carbohydrate biosynthesis; gluconeogenesis. This chain is Fructose-1,6-bisphosphatase class 1, found in Brucella anthropi (strain ATCC 49188 / DSM 6882 / CCUG 24695 / JCM 21032 / LMG 3331 / NBRC 15819 / NCTC 12168 / Alc 37) (Ochrobactrum anthropi).